Reading from the N-terminus, the 112-residue chain is DNA-binding protein TSIB_0525 (112 aa).

This sequence belongs to the PDCD5 family.

The polypeptide is DNA-binding protein TSIB_0525 (Thermococcus sibiricus (strain DSM 12597 / MM 739)).